The sequence spans 66 residues: Large ribosomal subunit protein bL35 (66 aa).

It belongs to the bacterial ribosomal protein bL35 family.

The sequence is that of Large ribosomal subunit protein bL35 from Brucella anthropi (strain ATCC 49188 / DSM 6882 / CCUG 24695 / JCM 21032 / LMG 3331 / NBRC 15819 / NCTC 12168 / Alc 37) (Ochrobactrum anthropi).